The following is a 515-amino-acid chain: Maturase K (515 aa).

It belongs to the intron maturase 2 family. MatK subfamily.

Its subcellular location is the plastid. It is found in the chloroplast. Its function is as follows. Usually encoded in the trnK tRNA gene intron. Probably assists in splicing its own and other chloroplast group II introns. This is Maturase K from Pinus pumila (Dwarf Siberian pine).